The sequence spans 936 residues: Pre-rRNA-processing protein FHL1 (936 aa).

Disordered stretches follow at residues 1–90 (MDGE…NGNL) and 139–169 (DHSR…QDNT). The segment covering 9–29 (ESSNHVGTSSPTTETQFTIDS) has biased composition (polar residues). A Phosphoserine modification is found at S44. Basic and acidic residues predominate over residues 139–150 (DHSREVSSKEDI). A Phosphoserine modification is found at S228. T230 and T247 each carry phosphothreonine. A compositionally biased stretch (polar residues) spans 243-257 (PPQNTVTENNSTDAE). The interval 243-270 (PPQNTVTENNSTDAETTQRKLSEPIDAS) is disordered. Phosphoserine is present on S264. One can recognise an FHA domain in the interval 300 to 357 (AIIGRRSENDFSHKVDVNLGPSKSISRRHAQIFYNFGTGRFELSIIGKNGAFVDDIFV). Residues 384–395 (EQERNDDSKSPE) show a composition bias toward basic and acidic residues. Positions 384-442 (EQERNDDSKSPENADIAESEINTRNLKKNEPKSKKKITTGAKPKKAQTKPAVKKEKKPP) are disordered. Residues 416-430 (SKKKITTGAKPKKAQ) show a composition bias toward basic residues. Residues 460 to 552 (TKPTVSYSAM…ERQKKKQSEI (93 aa)) constitute a DNA-binding region (fork-head). A disordered region spans residues 718-936 (AKAQHSKPIR…EVNVSLEEKL (219 aa)). Composition is skewed to polar residues over residues 742–753 (SQLSASASSHPN) and 765–777 (DPSS…QPRQ). Low complexity-rich tracts occupy residues 779–795 (ARAT…AAAS) and 815–853 (ESGT…TSSE). Residues 854-863 (SESESDSGSE) are compositionally biased toward acidic residues. A compositionally biased stretch (basic and acidic residues) spans 864-911 (VDEKNNKNEKIDSESIKNNESKDDIPSKDENSSNDNREISKTDEEGHD).

The protein localises to the nucleus. Functionally, acts as a transcriptional regulator that recruits coactivator IFH1 to the promoters of ribosomal protein genes. Recruited to ribosomal gene promoters by RAP1. The protein is Pre-rRNA-processing protein FHL1 (FHL1) of Saccharomyces cerevisiae (strain ATCC 204508 / S288c) (Baker's yeast).